We begin with the raw amino-acid sequence, 808 residues long: Protein translocase subunit SecA (808 aa).

ATP-binding positions include Q87, 105–109 (GEGKT), and D493.

Belongs to the SecA family. Monomer and homodimer. Part of the essential Sec protein translocation apparatus which comprises SecA, SecYEG and auxiliary proteins SecDF. Other proteins may also be involved.

The protein resides in the cell membrane. It is found in the cytoplasm. It carries out the reaction ATP + H2O + cellular proteinSide 1 = ADP + phosphate + cellular proteinSide 2.. In terms of biological role, part of the Sec protein translocase complex. Interacts with the SecYEG preprotein conducting channel. Has a central role in coupling the hydrolysis of ATP to the transfer of proteins into and across the cell membrane, serving as an ATP-driven molecular motor driving the stepwise translocation of polypeptide chains across the membrane. This chain is Protein translocase subunit SecA, found in Mycoplasma pneumoniae (strain ATCC 29342 / M129 / Subtype 1) (Mycoplasmoides pneumoniae).